Here is a 292-residue protein sequence, read N- to C-terminus: Glycine--tRNA ligase alpha subunit (292 aa).

Belongs to the class-II aminoacyl-tRNA synthetase family. As to quaternary structure, tetramer of two alpha and two beta subunits.

Its subcellular location is the cytoplasm. It catalyses the reaction tRNA(Gly) + glycine + ATP = glycyl-tRNA(Gly) + AMP + diphosphate. The polypeptide is Glycine--tRNA ligase alpha subunit (Pelotomaculum thermopropionicum (strain DSM 13744 / JCM 10971 / SI)).